Here is a 678-residue protein sequence, read N- to C-terminus: Endoplasmic reticulum membrane-associated RNA degradation protein (678 aa).

Helical transmembrane passes span 390–410 and 587–607; these read LLAFSLVLLLRFVDDCLLSVF and VLSLILLLIALELVNIHAVCG.

Its subcellular location is the endoplasmic reticulum membrane. In terms of biological role, may play a role in neuronal migration during embryonic development. In Homo sapiens (Human), this protein is Endoplasmic reticulum membrane-associated RNA degradation protein (ERMARD).